Here is a 270-residue protein sequence, read N- to C-terminus: Fibroblast growth factor 5 (270 aa).

Positions M1–A20 are cleaved as a signal peptide. A disordered region spans residues L26–S84. Positions N40–T49 are enriched in gly residues. Residues S50–G70 show a composition bias toward low complexity. Positions G75–S84 are enriched in polar residues. A glycan (N-linked (GlcNAc...) asparagine) is linked at N112. Residues E237–S257 are disordered.

It belongs to the heparin-binding growth factors family. As to quaternary structure, interacts with FGFR1 and FGFR2. Affinity between fibroblast growth factors (FGFs) and their receptors is increased by heparan sulfate glycosaminoglycans that function as coreceptors.

It localises to the secreted. In terms of biological role, plays an important role in the regulation of cell proliferation and cell differentiation. Required for normal regulation of the hair growth cycle. Functions as an inhibitor of hair elongation by promoting progression from anagen, the growth phase of the hair follicle, into catagen the apoptosis-induced regression phase. The sequence is that of Fibroblast growth factor 5 (FGF5) from Canis lupus familiaris (Dog).